Here is an 846-residue protein sequence, read N- to C-terminus: Major vault protein beta (846 aa).

At Ala2 the chain carries N-acetylalanine. MVP repeat units lie at residues 2 to 60, 61 to 115, 116 to 172, 173 to 225, 226 to 280, 281 to 332, 333 to 388, 389 to 458, and 459 to 521; these read ATPV…IPPR, QYCI…QPVP, LQVI…EPVR, AVII…GFIQ, ALVL…RDIK, AITL…IQNV, NVLS…RRKR, IPLD…STKV, and ITYR…FLGP.

The vault ribonucleoprotein particle is a huge (400 A x 670 A) cage structure of 12.9 MDa. It consists of a dimer of half-vaults, with each half-vault comprising 39 identical major vault protein (MVP) chains. Dictyostelium is one of the few organisms in which the major component is actually two proteins (alpha and beta).

It is found in the cytoplasm. The protein resides in the nucleus. Unknown, though MVP-beta is required for normal vault structure. The protein is Major vault protein beta (mvpB) of Dictyostelium discoideum (Social amoeba).